Reading from the N-terminus, the 154-residue chain is MTHPLIPEILDLAVPLAADLNLEVVGAVFHTHLNPPVLRVDIRNLSADTSLEDCERMSHRLETALDAADLVAGTYVLEVSSPGISRLLSSDREFVSFRGFSVIVRTREPIAGQREWVGNLVQRDEEFVYLNQKGRAISIPRHLVTQVQLNEKRS.

Belongs to the RimP family.

Its subcellular location is the cytoplasm. Its function is as follows. Required for maturation of 30S ribosomal subunits. The protein is Ribosome maturation factor RimP of Cyanothece sp. (strain PCC 7425 / ATCC 29141).